Reading from the N-terminus, the 1229-residue chain is Phosphorylase b kinase regulatory subunit alpha, liver isoform (1229 aa).

Residues 625-646 show a composition bias toward acidic residues; the sequence is DSLLEDDEEQEEEEEDKFEDDY. Positions 625 to 648 are disordered; the sequence is DSLLEDDEEQEEEEEDKFEDDYNN. The calmodulin-binding stretch occupies residues 825 to 855; it reads LEELYIQAGACKEWGLIRYISGILRKRVEVL. Residues 1024–1050 are disordered; sequence EIKQRCSSPSTPSGILSPVGPGPADGQ. Residues 1028 to 1037 show a composition bias toward polar residues; sequence RCSSPSTPSG. Residues 1052-1092 form a calmodulin-binding region; that stretch reads HWVERQGQWLRRRRLDGAINRVPVGFYQKVWKILQKCHGLS. Cysteine 1226 carries the S-farnesyl cysteine lipid modification.

Belongs to the phosphorylase b kinase regulatory chain family. Polymer of 16 chains, four each of alpha, beta, gamma, and delta. Alpha and beta are regulatory chains, gamma is the catalytic chain, and delta is calmodulin. In terms of processing, although the final Cys may be farnesylated, the terminal tripeptide is probably not removed, and the C-terminus is not methylated.

The protein resides in the cell membrane. Its pathway is glycan biosynthesis; glycogen metabolism. With respect to regulation, by phosphorylation of various serine residues and by calcium. Its function is as follows. Phosphorylase b kinase catalyzes the phosphorylation of serine in certain substrates, including troponin I. The alpha chain may bind calmodulin. This is Phosphorylase b kinase regulatory subunit alpha, liver isoform (phka2) from Takifugu rubripes (Japanese pufferfish).